The sequence spans 448 residues: Trigger factor (448 aa).

Residues 167-253 (GSIVRVDFVE…LKDIKRRDIP (87 aa)) enclose the PPIase FKBP-type domain.

The protein belongs to the FKBP-type PPIase family. Tig subfamily.

The protein localises to the cytoplasm. The catalysed reaction is [protein]-peptidylproline (omega=180) = [protein]-peptidylproline (omega=0). Its function is as follows. Involved in protein export. Acts as a chaperone by maintaining the newly synthesized protein in an open conformation. Functions as a peptidyl-prolyl cis-trans isomerase. In Borrelia turicatae (strain 91E135), this protein is Trigger factor.